A 203-amino-acid chain; its full sequence is Acireductone dioxygenase 3 (203 aa).

Fe(2+) contacts are provided by His-96, His-98, Glu-102, and His-141. The Ni(2+) site is built by His-96, His-98, Glu-102, and His-141.

This sequence belongs to the acireductone dioxygenase (ARD) family. It depends on Fe(2+) as a cofactor. Requires Ni(2+) as cofactor.

The protein localises to the cytoplasm. It is found in the nucleus. It catalyses the reaction 1,2-dihydroxy-5-(methylsulfanyl)pent-1-en-3-one + O2 = 4-methylsulfanyl-2-oxobutanoate + formate + 2 H(+). The catalysed reaction is 1,2-dihydroxy-5-(methylsulfanyl)pent-1-en-3-one + O2 = 3-(methylsulfanyl)propanoate + CO + formate + 2 H(+). It participates in amino-acid biosynthesis; L-methionine biosynthesis via salvage pathway; L-methionine from S-methyl-5-thio-alpha-D-ribose 1-phosphate: step 5/6. Its function is as follows. Catalyzes 2 different reactions between oxygen and the acireductone 1,2-dihydroxy-3-keto-5-methylthiopentene (DHK-MTPene) depending upon the metal bound in the active site. Fe-containing acireductone dioxygenase (Fe-ARD) produces formate and 2-keto-4-methylthiobutyrate (KMTB), the alpha-ketoacid precursor of methionine in the methionine recycle pathway. Ni-containing acireductone dioxygenase (Ni-ARD) produces methylthiopropionate, carbon monoxide and formate, and does not lie on the methionine recycle pathway. The sequence is that of Acireductone dioxygenase 3 from Physcomitrium patens (Spreading-leaved earth moss).